The sequence spans 523 residues: Mitochondrial distribution and morphology protein 12 (523 aa).

In terms of domain architecture, SMP-LTD spans 1–483 (MSFDINWEKL…WPSWICVDMA (483 aa)). The span at 108–117 (HEADIINDHD) shows a compositional bias: basic and acidic residues. Disordered stretches follow at residues 108–160 (HEAD…QYDE), 178–213 (SAST…PFQS), 270–313 (KTKE…NAKN), and 483–523 (AEND…KKED). Composition is skewed to acidic residues over residues 118–140 (YGDE…DDEN) and 148–158 (EDEENEESSQY). Polar residues-rich tracts occupy residues 178 to 187 (SASTPKRTSP) and 277 to 288 (SGDQQQGKQTGK). Residues 289 to 313 (ANEKGQKHKHEHEEEQGSDKQNAKN) are compositionally biased toward basic and acidic residues. Over residues 483–501 (AENDDEEEDDDDDDHDEDN) the composition is skewed to acidic residues. The span at 502–523 (EGRGRMRDTGDVDVRDHDKKED) shows a compositional bias: basic and acidic residues.

The protein belongs to the MDM12 family. In terms of assembly, component of the ER-mitochondria encounter structure (ERMES) or MDM complex, composed of MMM1, MDM10, MDM12 and MDM34. An MMM1 homodimer associates with one molecule of MDM12 on each side in a pairwise head-to-tail manner, and the SMP-LTD domains of MMM1 and MDM12 generate a continuous hydrophobic tunnel for phospholipid trafficking.

The protein resides in the mitochondrion outer membrane. It localises to the endoplasmic reticulum membrane. Functionally, component of the ERMES/MDM complex, which serves as a molecular tether to connect the endoplasmic reticulum (ER) and mitochondria. Components of this complex are involved in the control of mitochondrial shape and protein biogenesis, and function in nonvesicular lipid trafficking between the ER and mitochondria. MDM12 is required for the interaction of the ER-resident membrane protein MMM1 and the outer mitochondrial membrane-resident beta-barrel protein MDM10. The MDM12-MMM1 subcomplex functions in the major beta-barrel assembly pathway that is responsible for biogenesis of all mitochondrial outer membrane beta-barrel proteins, and acts in a late step after the SAM complex. The MDM10-MDM12-MMM1 subcomplex further acts in the TOM40-specific pathway after the action of the MDM12-MMM1 complex. Essential for establishing and maintaining the structure of mitochondria and maintenance of mtDNA nucleoids. In Lodderomyces elongisporus (strain ATCC 11503 / CBS 2605 / JCM 1781 / NBRC 1676 / NRRL YB-4239) (Yeast), this protein is Mitochondrial distribution and morphology protein 12.